We begin with the raw amino-acid sequence, 508 residues long: Cyclic AMP-responsive element-binding protein 5 (508 aa).

The C2H2-type zinc-finger motif lies at 16–40; the sequence is FVCSAPGCSQRFPTEDHLMIHRHKH. A Glycyl lysine isopeptide (Lys-Gly) (interchain with G-Cter in SUMO2) cross-link involves residue Lys50. Phosphothreonine is present on residues Thr59 and Thr61. Position 137 is a phosphoserine (Ser137). A disordered region spans residues 265 to 391; it reads RQDQTPHHHM…LERNRAAATR (127 aa). Basic residues-rich tracts occupy residues 271–280 and 289–326; these read HHHMHSHPHQ and PYPH…HPAH. The span at 337 to 346 shows a compositional bias: polar residues; that stretch reads TGNQAQVSPA. Over residues 347–357 the composition is skewed to low complexity; sequence TQQMQPTQTIQ. Positions 369–386 are enriched in basic and acidic residues; it reads VVDEDPDERRRKFLERNR. The bZIP domain maps to 375–438; it reads DERRRKFLER…AQLKQLLLTH (64 aa). Positions 377-397 are basic motif; sequence RRRKFLERNRAAATRCRQKRK. Residues 403 to 431 form a leucine-zipper region; sequence LEKKAEELTQTNMQLQNEVSMLKNEVAQL. The disordered stretch occupies residues 449 to 468; that stretch reads ESQGYLSPESSPPASPVPAC.

This sequence belongs to the bZIP family. Binds DNA as a homodimer or as a heterodimer with JUN or ATF2/CREBP1.

The protein localises to the nucleus. Binds to the cAMP response element and activates transcription. In Homo sapiens (Human), this protein is Cyclic AMP-responsive element-binding protein 5 (CREB5).